The following is a 413-amino-acid chain: Multifunctional CCA protein (413 aa).

ATP-binding residues include G8 and R11. G8 and R11 together coordinate CTP. Positions 21 and 23 each coordinate Mg(2+). ATP contacts are provided by R91, R137, and R140. Residues R91, R137, and R140 each contribute to the CTP site. The region spanning 228–329 is the HD domain; the sequence is CGIHTLMSLR…WRLLQRLDVL (102 aa).

Belongs to the tRNA nucleotidyltransferase/poly(A) polymerase family. Bacterial CCA-adding enzyme type 1 subfamily. Monomer. Can also form homodimers and oligomers. Requires Mg(2+) as cofactor. The cofactor is Ni(2+).

It carries out the reaction a tRNA precursor + 2 CTP + ATP = a tRNA with a 3' CCA end + 3 diphosphate. The enzyme catalyses a tRNA with a 3' CCA end + 2 CTP + ATP = a tRNA with a 3' CCACCA end + 3 diphosphate. In terms of biological role, catalyzes the addition and repair of the essential 3'-terminal CCA sequence in tRNAs without using a nucleic acid template. Adds these three nucleotides in the order of C, C, and A to the tRNA nucleotide-73, using CTP and ATP as substrates and producing inorganic pyrophosphate. tRNA 3'-terminal CCA addition is required both for tRNA processing and repair. Also involved in tRNA surveillance by mediating tandem CCA addition to generate a CCACCA at the 3' terminus of unstable tRNAs. While stable tRNAs receive only 3'-terminal CCA, unstable tRNAs are marked with CCACCA and rapidly degraded. This is Multifunctional CCA protein from Acinetobacter baylyi (strain ATCC 33305 / BD413 / ADP1).